The primary structure comprises 196 residues: Ribonuclease HII (196 aa).

Positions 15-196 (YIVAGIDEAG…RKSFRYSCFI (182 aa)) constitute an RNase H type-2 domain. Positions 21, 22, and 112 each coordinate a divalent metal cation.

It belongs to the RNase HII family. It depends on Mn(2+) as a cofactor. Mg(2+) serves as cofactor.

The protein localises to the cytoplasm. The catalysed reaction is Endonucleolytic cleavage to 5'-phosphomonoester.. Endonuclease that specifically degrades the RNA of RNA-DNA hybrids. This Rickettsia canadensis (strain McKiel) protein is Ribonuclease HII.